The chain runs to 331 residues: Probable protein phosphatase 2C 72 (331 aa).

One can recognise a PPM-type phosphatase domain in the interval 43-324 (LGSVCSIQGT…DDITVICLFL (282 aa)). Mn(2+)-binding residues include D78, G79, D268, and D315.

The protein belongs to the PP2C family. It depends on Mg(2+) as a cofactor. Requires Mn(2+) as cofactor.

The catalysed reaction is O-phospho-L-seryl-[protein] + H2O = L-seryl-[protein] + phosphate. The enzyme catalyses O-phospho-L-threonyl-[protein] + H2O = L-threonyl-[protein] + phosphate. In Arabidopsis thaliana (Mouse-ear cress), this protein is Probable protein phosphatase 2C 72.